The primary structure comprises 832 residues: MLPFLLATLGTTALNNSNPKDYCYSARIRSTVLQGLPFGGVPTVLALDFMCFLALLFLFSILRKVAWDYGRLALVTDADRLRRQERDRVEQEYVASAMHGDSHDRYERLTSVSSSVDFDQRDNGFCSWLTAIFRIKDDEIRDKCGGDAVHYLSFQRHIIGLLVVVGVLSVGIVLPVNFSGDLLENNAYSFGRTTIANLKSGNNLLWLHTSFAFLYLLLTVYSMRRHTSKMRYKEDDLVKRTLFINGISKYAESEKIKKHFEEAYPNCTVLEARPCYNVARLMFLDAERKKAERGKLYFTNLQSKENVPTMINPKPCGHLCCCVVRGCEQVEAIEYYTKLEQKLKEDYKREKEKVNEKPLGMAFVTFHNETITAIILKDFNVCKCQGCTCRGEPRPSSCSESLHISNWTVSYAPDPQNIYWEHLSIRGFIWWLRCLVINVVLFILLFFLTTPAIIITTMDKFNVTKPVEYLNNPIITQFFPTLLLWCFSALLPTIVYYSAFFEAHWTRSGENRTTMHKCYTFLIFMVLLLPSLGLSSLDLFFRWLFDKKFLAEAAIRFECVFLPDNGAFFVNYVIASAFIGNAMDLLRIPGLLMYMIRLCLARSAAERRNVKRHQAYEFQFGAAYAWMMCVFTVVMTYSITCPIIVPFGLMYMLLKHLVDRYNLYYAYLPAKLDKKIHSGAVNQVVAAPILCLFWLLFFSTMRTGFLAPTSMFTFVVLVITIVICLCHVCFGHFKYLSAHNYKIEHTETDTVDPRSNGRPPTAAAVPKSAKYIAQVLQDSEVDGDGDGAPGSSGDEPPSSSSQDEELLMPPDALTDTDFQSCEDSLIENEIHQ.

At 1 to 40 (MLPFLLATLGTTALNNSNPKDYCYSARIRSTVLQGLPFGG) the chain is on the extracellular side. A helical transmembrane segment spans residues 41 to 65 (VPTVLALDFMCFLALLFLFSILRKV). Residue C51 is the site of S-palmitoyl cysteine attachment. Residues 66–145 (AWDYGRLALV…KDDEIRDKCG (80 aa)) are Cytoplasmic-facing. Positions 86–88 (RDR) match the Mediates endoplasmic reticulum retention motif. Phosphoserine occurs at positions 111, 113, 114, and 115. The S-palmitoyl cysteine moiety is linked to residue C126. Residues 146–178 (GDAVHYLSFQRHIIGLLVVVGVLSVGIVLPVNF) form a helical membrane-spanning segment. The Extracellular segment spans residues 179 to 202 (SGDLLENNAYSFGRTTIANLKSGN). The helical transmembrane segment at 203 to 227 (NLLWLHTSFAFLYLLLTVYSMRRHT) threads the bilayer. Residues 228 to 427 (SKMRYKEDDL…IYWEHLSIRG (200 aa)) are Cytoplasmic-facing. An intracellular linker IL2; confers mechanosensitivity region spans residues 231 to 426 (RYKEDDLVKR…NIYWEHLSIR (196 aa)). Residues C382 and C398 are each lipidated (S-palmitoyl cysteine). The chain crosses the membrane as a helical span at residues 428–457 (FIWWLRCLVINVVLFILLFFLTTPAIIITT). Over 458-472 (MDKFNVTKPVEYLNN) the chain is Extracellular. N-linked (GlcNAc...) asparagine glycosylation occurs at N462. A helical membrane pass occupies residues 473–502 (PIITQFFPTLLLWCFSALLPTIVYYSAFFE). The Cytoplasmic portion of the chain corresponds to 503–506 (AHWT). Residues 507–543 (RSGENRTTMHKCYTFLIFMVLLLPSLGLSSLDLFFRW) form a helical membrane-spanning segment. Residues 544–566 (LFDKKFLAEAAIRFECVFLPDNG) lie on the Extracellular side of the membrane. The chain crosses the membrane as a helical span at residues 567-599 (AFFVNYVIASAFIGNAMDLLRIPGLLMYMIRLC). A gating helix region spans residues 567–599 (AFFVNYVIASAFIGNAMDLLRIPGLLMYMIRLC). Topologically, residues 600-619 (LARSAAERRNVKRHQAYEFQ) are cytoplasmic. A helical transmembrane segment spans residues 620-638 (FGAAYAWMMCVFTVVMTYS). At 639-641 (ITC) the chain is on the extracellular side. The chain crosses the membrane as a helical span at residues 642–666 (PIIVPFGLMYMLLKHLVDRYNLYYA). Residues 667–673 (YLPAKLD) lie on the Cytoplasmic side of the membrane. The chain crosses the membrane as a helical span at residues 674 to 702 (KKIHSGAVNQVVAAPILCLFWLLFFSTMR). At 703–707 (TGFLA) the chain is on the extracellular side. The chain crosses the membrane as a helical span at residues 708–728 (PTSMFTFVVLVITIVICLCHV). Residues C726 and C729 are each lipidated (S-palmitoyl cysteine). Residues 729–832 (CFGHFKYLSA…DSLIENEIHQ (104 aa)) lie on the Cytoplasmic side of the membrane. The segment at 780–814 (EVDGDGDGAPGSSGDEPPSSSSQDEELLMPPDALT) is disordered. Residues 789–801 (PGSSGDEPPSSSS) show a composition bias toward low complexity.

Belongs to the CSC1 (TC 1.A.17) family. Monomer. Interacts with SLC19A2; interaction is required for the phospholipid scramblase activity. Post-translationally, palmitoylation is required for localization to the plasma membrane and stability. N-Glycosylated.

The protein resides in the cell membrane. It is found in the endoplasmic reticulum membrane. Its subcellular location is the lysosome membrane. It localises to the early endosome membrane. The enzyme catalyses Ca(2+)(in) = Ca(2+)(out). The catalysed reaction is Mg(2+)(in) = Mg(2+)(out). It catalyses the reaction K(+)(in) = K(+)(out). It carries out the reaction Na(+)(in) = Na(+)(out). The enzyme catalyses Cs(+)(in) = Cs(+)(out). The catalysed reaction is a 1,2-diacyl-sn-glycero-3-phosphocholine(in) = a 1,2-diacyl-sn-glycero-3-phosphocholine(out). It catalyses the reaction a sphingomyelin(in) = a sphingomyelin(out). Its function is as follows. Mechanosensitive cation channel with low conductance and high activation threshold. Osmosensitive cation channel preferentially activated by hypotonic stress. Also acts as a phospholipid scramblase in response to changes in membrane structure: upon changes in membrane curvature and thickness, alters its conformation and translocates phospholipids, such as phosphatidylcholine and sphingomyelin, thereby controlling plasma membrane lipid distribution. Forms a heterodimer with SLC19A2, which mediates phospholipid scramblase activity following Ca(2+) stimulation. Expressed in excitatory neurons of the subfornical organ and functions as a thirst receptor that mediates neuronal response to hyperosmolality to drive thirst and drinking behavior. Facilitates intestinal motility by promoting proliferation of intestinal stem cells. Essential for the baby's first breath and respiration throughout life. Upon lung inflation conducts cation currents in alveolar type 1 and 2 cells triggering lamellar body exocytosis and surfactant secretion into airspace. Acts as an osmosensor in cochlear outer hair cells (OHCs) where it mediates calcium influx and regulatory volume decrease response. Required for the maintenance of OHC morphology, OHC survival and normal hearing. This is Mechanosensitive cation channel TMEM63B from Homo sapiens (Human).